The chain runs to 238 residues: Neuromodulin (238 aa).

Residues 1 to 238 (MLCCMRRTKQ…EEPEADQEHA (238 aa)) are disordered. 2 S-palmitoyl cysteine lipidation sites follow: C3 and C4. Positions 9–32 (KQVEKNDEDQKIEQDGIKPEDKAH) are enriched in basic and acidic residues. One can recognise an IQ domain in the interval 31–60 (AHKAATKIQASFRGHITRKKLKGEKKDDAQ). Phosphoserine; by PHK and PKC is present on S41. The segment covering 54-83 (EKKDDAQAAEAEANKKDEAPVADGVEKKGE) has biased composition (basic and acidic residues). Positions 84 to 95 (GTTATEAAPATG) are enriched in low complexity. Over residues 97–116 (KPDEPGKAGETPSEEKKGEG) the composition is skewed to basic and acidic residues. Over residues 119-130 (ATEQAAPQAPAS) the composition is skewed to low complexity. The segment covering 139–154 (ETESATKASTDNSPSS) has biased composition (polar residues). 3 positions are modified to phosphoserine: S151, S153, and S154. The segment covering 155–167 (KAEDAPAKEEPKQ) has biased composition (basic and acidic residues). Residues 168 to 199 (ADVPAAVTAAAATTPAAEDAAAKATAQPPTET) are compositionally biased toward low complexity. The residue at position 181 (T181) is a Phosphothreonine. S202 and S203 each carry phosphoserine; by CK2. The span at 213–225 (DETKPKESARQDE) shows a compositional bias: basic and acidic residues. Positions 226–238 (GKEEEPEADQEHA) are enriched in acidic residues.

Belongs to the neuromodulin family. As to quaternary structure, identified in a complex containing FGFR4, NCAM1, CDH2, PLCG1, FRS2, SRC, SHC1, GAP43 and CTTN. Interacts (via IQ domain) with calmodulin. Binds calmodulin with a greater affinity in the absence of Ca(2+) than in its presence. In terms of processing, phosphorylated. Phosphorylation of this protein by a protein kinase C is specifically correlated with certain forms of synaptic plasticity. Post-translationally, palmitoylated by ZDHHC3. Palmitoylation is regulated by ARF6 and is essential for plasma membrane association and axonal and dendritic filopodia induction. Deacylated by LYPLA2.

The protein resides in the cell membrane. The protein localises to the cell projection. Its subcellular location is the growth cone membrane. It localises to the synapse. It is found in the filopodium membrane. The protein resides in the perikaryon. The protein localises to the dendrite. Its subcellular location is the axon. It localises to the cytoplasm. In terms of biological role, this protein is associated with nerve growth. It is a major component of the motile 'growth cones' that form the tips of elongating axons. Plays a role in axonal and dendritic filopodia induction. The sequence is that of Neuromodulin (GAP43) from Macaca fascicularis (Crab-eating macaque).